Consider the following 269-residue polypeptide: Small ribosomal subunit protein uS2 (269 aa).

Positions 224-269 (ANQGREDSEDVYSETENDTEETDEELVSEEDLKEFVENSEEESDEE) are disordered. Acidic residues predominate over residues 230–269 (DSEDVYSETENDTEETDEELVSEEDLKEFVENSEEESDEE).

It belongs to the universal ribosomal protein uS2 family.

The protein is Small ribosomal subunit protein uS2 of Finegoldia magna (strain ATCC 29328 / DSM 20472 / WAL 2508) (Peptostreptococcus magnus).